The primary structure comprises 282 residues: Acyl-CoA-binding domain-containing protein 6 (282 aa).

The segment covering 1-12 (MASSFLPSGATT) has biased composition (polar residues). The segment at 1–34 (MASSFLPSGATTGDSGGELSSGDDSGDVESLQSP) is disordered. The span at 17–31 (GELSSGDDSGDVESL) shows a compositional bias: low complexity. Ser41 carries the post-translational modification Phosphoserine. Positions 42–127 (LPELFEKAAE…VKKLDPSWNP (86 aa)) constitute an ACB domain. An acyl-CoA is bound by residues 69–73 (YARYK) and Lys95. Ser106 is subject to Phosphoserine. Tyr114 is a binding site for an acyl-CoA. ANK repeat units follow at residues 191–220 (EGRT…DINC) and 224–253 (EGQT…DPTL).

In terms of assembly, monomer.

The protein resides in the cytoplasm. In terms of biological role, binds long-chain acyl-coenzyme A molecules with a strong preference for unsaturated C18:1-CoA, lower affinity for unsaturated C20:4-CoA, and very weak affinity for saturated C16:0-CoA. Does not bind fatty acids. The protein is Acyl-CoA-binding domain-containing protein 6 (ACBD6) of Bos taurus (Bovine).